A 185-amino-acid chain; its full sequence is Ribose 1,5-bisphosphate phosphokinase PhnN (185 aa).

The protein belongs to the ribose 1,5-bisphosphokinase family.

It carries out the reaction alpha-D-ribose 1,5-bisphosphate + ATP = 5-phospho-alpha-D-ribose 1-diphosphate + ADP. It functions in the pathway metabolic intermediate biosynthesis; 5-phospho-alpha-D-ribose 1-diphosphate biosynthesis; 5-phospho-alpha-D-ribose 1-diphosphate from D-ribose 5-phosphate (route II): step 3/3. Its function is as follows. Catalyzes the phosphorylation of ribose 1,5-bisphosphate to 5-phospho-D-ribosyl alpha-1-diphosphate (PRPP). The polypeptide is Ribose 1,5-bisphosphate phosphokinase PhnN (Escherichia coli (strain SMS-3-5 / SECEC)).